Here is a 147-residue protein sequence, read N- to C-terminus: MQTTHLGKNSPIPQSPEEASLDYVPNPRQGKNYLIRFAIPEFTSLCPVTGQPDFAHLVIDYVPDKLIVESKSLKLFLGSFRNHRAFHEDCTVGIGEKLFTEMKAQWLRIGGYWYPRGGIPIDVFWQSGAAPQDVWLPEQGVPPYRGR.

Residues 1–23 (MQTTHLGKNSPIPQSPEEASLDY) form a disordered region. The Thioimide intermediate role is filled by Cys46. The Proton donor role is filled by Asp53. Residues 68–70 (VES) and 87–88 (HE) each bind substrate.

This sequence belongs to the GTP cyclohydrolase I family. QueF type 1 subfamily.

It localises to the cytoplasm. It catalyses the reaction 7-aminomethyl-7-carbaguanine + 2 NADP(+) = 7-cyano-7-deazaguanine + 2 NADPH + 3 H(+). It participates in tRNA modification; tRNA-queuosine biosynthesis. Functionally, catalyzes the NADPH-dependent reduction of 7-cyano-7-deazaguanine (preQ0) to 7-aminomethyl-7-deazaguanine (preQ1). This is NADPH-dependent 7-cyano-7-deazaguanine reductase from Zymomonas mobilis subsp. mobilis (strain ATCC 31821 / ZM4 / CP4).